Consider the following 649-residue polypeptide: 1-deoxy-D-xylulose-5-phosphate synthase 1 (649 aa).

Residues H73 and 113–115 contribute to the thiamine diphosphate site; that span reads SHA. A Mg(2+)-binding site is contributed by D144. Thiamine diphosphate contacts are provided by residues 145-146, N174, Y285, and E367; that span reads GA. N174 provides a ligand contact to Mg(2+). The interval 623–649 is disordered; it reads LLPGTGTRPGAQEYRPRMPLTDWSEPA.

Belongs to the transketolase family. DXPS subfamily. In terms of assembly, homodimer. Mg(2+) is required as a cofactor. Thiamine diphosphate serves as cofactor.

The enzyme catalyses D-glyceraldehyde 3-phosphate + pyruvate + H(+) = 1-deoxy-D-xylulose 5-phosphate + CO2. The protein operates within metabolic intermediate biosynthesis; 1-deoxy-D-xylulose 5-phosphate biosynthesis; 1-deoxy-D-xylulose 5-phosphate from D-glyceraldehyde 3-phosphate and pyruvate: step 1/1. Catalyzes the acyloin condensation reaction between C atoms 2 and 3 of pyruvate and glyceraldehyde 3-phosphate to yield 1-deoxy-D-xylulose-5-phosphate (DXP). In Kitasatospora griseola (Streptomyces griseolosporeus), this protein is 1-deoxy-D-xylulose-5-phosphate synthase 1.